Here is a 360-residue protein sequence, read N- to C-terminus: Mitogen-activated protein kinase 1 (360 aa).

Ala2 carries the post-translational modification N-acetylalanine. Residues 25–313 (YTNLSYIGEG…VEQALAHPYL (289 aa)) enclose the Protein kinase domain. Residue Ser29 is modified to Phosphoserine; by SGK1. ATP contacts are provided by residues 31–39 (IGEGAYGMV) and Lys54. Catalysis depends on Asp149, which acts as the Proton acceptor. Thr185 carries the post-translational modification Phosphothreonine; by MAP2K1 and MAP2K2. The short motif at 185–187 (TEY) is the TXY element. Tyr187 is subject to Phosphotyrosine; by MAP2K1 and MAP2K2. Thr190 carries the post-translational modification Phosphothreonine; by autocatalysis. A phosphoserine mark is found at Ser246 and Ser248. A DNA-binding region spans residues 259–277 (KARNYLLSLPHKNKVPWNR). Ser284 bears the Phosphoserine mark. Positions 318-322 (DPSDE) match the Cytoplasmic retention motif motif. The short motif at 327–333 (APFKFDM) is the Nuclear translocation motif element.

Belongs to the protein kinase superfamily. CMGC Ser/Thr protein kinase family. MAP kinase subfamily. In terms of assembly, binds both upstream activators and downstream substrates in multimolecular complexes. This interaction inhibits its tyrosine-kinase activity. Interacts with ADAM15, ARHGEF2, ARRB2, DAPK1 (via death domain), HSF4, IER3, IPO7, NISCH, SGK1, and isoform 1 of NEK2. Interacts (via phosphorylated form) with TPR (via C-terminal region and phosphorylated form); the interaction requires dimerization of MAPK1/ERK2 and increases following EGF stimulation. Interacts with MAP2K1. Interacts with DUSP6. Interacts (phosphorylated form) with CAV2 ('Tyr-19'-phosphorylated form); the interaction, promoted by insulin, leads to nuclear location and MAPK1 activation. Interacts with MORG1, PEA15 and MKNK2. MKNK2 isoform 1 binding prevents from dephosphorylation and inactivation. Interacts with DCC. The phosphorylated form interacts with PML (isoform PML-4). Interacts with STYX. Interacts with CDK2AP2. Interacts with CAVIN4. Interacts with DUSP7; the interaction enhances DUSP7 phosphatase activity. Interacts with GIT1; this interaction is necessary for MAPK1 localization to focal adhesions. Interacts with ZNF263. Interacts with phosphoglycerate kinase PGK1; the interaction is direct, occurs under hypoxic conditions, and promotes interaction between PGK1 and PIN1. As to quaternary structure, (Microbial infection) Interacts with HIV-1 Nef through its SH3 domain. It depends on Mg(2+) as a cofactor. Phosphorylated upon KIT and FLT3 signaling. Dually phosphorylated on Thr-185 and Tyr-187, which activates the enzyme. Undergoes regulatory phosphorylation on additional residues such as Ser-246 and Ser-248 in the kinase insert domain (KID) These phosphorylations, which are probably mediated by more than one kinase, are important for binding of MAPK1/ERK2 to importin-7 (IPO7) and its nuclear translocation. In addition, autophosphorylation of Thr-190 was shown to affect the subcellular localization of MAPK1/ERK2 as well. Ligand-activated ALK induces tyrosine phosphorylation. Dephosphorylated by PTPRJ at Tyr-187. Phosphorylation on Ser-29 by SGK1 results in its activation by enhancing its interaction with MAP2K1/MEK1 and MAP2K2/MEK2. DUSP3 and DUSP6 dephosphorylate specifically MAPK1/ERK2 and MAPK3/ERK1 whereas DUSP9 dephosphorylates a broader range of MAPKs. Dephosphorylated by DUSP1 and DUSP2 at Thr-185 and Tyr-187. Post-translationally, ISGylated. In terms of processing, ubiquitinated by TRIM15 via 'Lys-63'-linked ubiquitination; leading to activation. Deubiquitinated by CYLD.

The protein localises to the cytoplasm. Its subcellular location is the cytoskeleton. It is found in the spindle. The protein resides in the nucleus. It localises to the microtubule organizing center. The protein localises to the centrosome. Its subcellular location is the membrane. It is found in the caveola. The protein resides in the cell junction. It localises to the focal adhesion. It carries out the reaction L-seryl-[protein] + ATP = O-phospho-L-seryl-[protein] + ADP + H(+). The enzyme catalyses L-threonyl-[protein] + ATP = O-phospho-L-threonyl-[protein] + ADP + H(+). With respect to regulation, phosphorylated by MAP2K1/MEK1 and MAP2K2/MEK2 on Thr-185 and Tyr-187 in response to external stimuli like insulin or NGF. Both phosphorylations are required for activity. This phosphorylation causes dramatic conformational changes, which enable full activation and interaction of MAPK1/ERK2 with its substrates. Phosphorylation on Ser-29 by SGK1 results in its activation by enhancing its interaction with MAP2K1/MEK1 and MAP2K2/MEK2. Dephosphorylated and inactivated by DUSP1, DUSP3, DUSP6 and DUSP9. Inactivated by pyrimidylpyrrole inhibitors. Functionally, serine/threonine kinase which acts as an essential component of the MAP kinase signal transduction pathway. MAPK1/ERK2 and MAPK3/ERK1 are the 2 MAPKs which play an important role in the MAPK/ERK cascade. They participate also in a signaling cascade initiated by activated KIT and KITLG/SCF. Depending on the cellular context, the MAPK/ERK cascade mediates diverse biological functions such as cell growth, adhesion, survival and differentiation through the regulation of transcription, translation, cytoskeletal rearrangements. The MAPK/ERK cascade also plays a role in initiation and regulation of meiosis, mitosis, and postmitotic functions in differentiated cells by phosphorylating a number of transcription factors. About 160 substrates have already been discovered for ERKs. Many of these substrates are localized in the nucleus, and seem to participate in the regulation of transcription upon stimulation. However, other substrates are found in the cytosol as well as in other cellular organelles, and those are responsible for processes such as translation, mitosis and apoptosis. Moreover, the MAPK/ERK cascade is also involved in the regulation of the endosomal dynamics, including lysosome processing and endosome cycling through the perinuclear recycling compartment (PNRC); as well as in the fragmentation of the Golgi apparatus during mitosis. The substrates include transcription factors (such as ATF2, BCL6, ELK1, ERF, FOS, HSF4 or SPZ1), cytoskeletal elements (such as CANX, CTTN, GJA1, MAP2, MAPT, PXN, SORBS3 or STMN1), regulators of apoptosis (such as BAD, BTG2, CASP9, DAPK1, IER3, MCL1 or PPARG), regulators of translation (such as EIF4EBP1 and FXR1) and a variety of other signaling-related molecules (like ARHGEF2, DCC, FRS2 or GRB10). Protein kinases (such as RAF1, RPS6KA1/RSK1, RPS6KA3/RSK2, RPS6KA2/RSK3, RPS6KA6/RSK4, SYK, MKNK1/MNK1, MKNK2/MNK2, RPS6KA5/MSK1, RPS6KA4/MSK2, MAPKAPK3 or MAPKAPK5) and phosphatases (such as DUSP1, DUSP4, DUSP6 or DUSP16) are other substrates which enable the propagation the MAPK/ERK signal to additional cytosolic and nuclear targets, thereby extending the specificity of the cascade. Mediates phosphorylation of TPR in response to EGF stimulation. May play a role in the spindle assembly checkpoint. Phosphorylates PML and promotes its interaction with PIN1, leading to PML degradation. Phosphorylates CDK2AP2. Phosphorylates phosphoglycerate kinase PGK1 under hypoxic conditions to promote its targeting to the mitochondrion and suppress the formation of acetyl-coenzyme A from pyruvate. Acts as a transcriptional repressor. Binds to a [GC]AAA[GC] consensus sequence. Repress the expression of interferon gamma-induced genes. Seems to bind to the promoter of CCL5, DMP1, IFIH1, IFITM1, IRF7, IRF9, LAMP3, OAS1, OAS2, OAS3 and STAT1. Transcriptional activity is independent of kinase activity. The polypeptide is Mitogen-activated protein kinase 1 (Homo sapiens (Human)).